A 226-amino-acid polypeptide reads, in one-letter code: Ribonuclease 3 (226 aa).

One can recognise an RNase III domain in the interval 6–128; the sequence is INRLQRKLGY…LIGGVFLDSN (123 aa). Glutamate 41 is a Mg(2+) binding site. The active site involves aspartate 45. Residues aspartate 114 and glutamate 117 each contribute to the Mg(2+) site. Residue glutamate 117 is part of the active site. The 71-residue stretch at 155-225 folds into the DRBM domain; the sequence is DPKTRLQEYL…AEQALKKLEL (71 aa).

The protein belongs to the ribonuclease III family. As to quaternary structure, homodimer. Mg(2+) is required as a cofactor.

Its subcellular location is the cytoplasm. It catalyses the reaction Endonucleolytic cleavage to 5'-phosphomonoester.. Functionally, digests double-stranded RNA. Involved in the processing of primary rRNA transcript to yield the immediate precursors to the large and small rRNAs (23S and 16S). Processes some mRNAs, and tRNAs when they are encoded in the rRNA operon. Processes pre-crRNA and tracrRNA of type II CRISPR loci if present in the organism. This Salmonella typhi protein is Ribonuclease 3.